The sequence spans 450 residues: UDP-N-acetylmuramoylalanine--D-glutamate ligase (450 aa).

111–117 lines the ATP pocket; that stretch reads GTNGKST.

It belongs to the MurCDEF family.

The protein localises to the cytoplasm. The enzyme catalyses UDP-N-acetyl-alpha-D-muramoyl-L-alanine + D-glutamate + ATP = UDP-N-acetyl-alpha-D-muramoyl-L-alanyl-D-glutamate + ADP + phosphate + H(+). The protein operates within cell wall biogenesis; peptidoglycan biosynthesis. Functionally, cell wall formation. Catalyzes the addition of glutamate to the nucleotide precursor UDP-N-acetylmuramoyl-L-alanine (UMA). The sequence is that of UDP-N-acetylmuramoylalanine--D-glutamate ligase from Rickettsia bellii (strain RML369-C).